Consider the following 262-residue polypeptide: MGYLKRFALYISVMILIFAIAGCGKGNETKEDSKEEQIKKSFAKTLDMYPIKNLEDLYDKEGYRDGEFKKGDKGMWTIYTDFAKSNKQGGLSNEGMVLYLDRNTRTAKGHYFVKTFYNKGKFPDRKNYKVEMKNNKIILLDKVEDTNLKKRIENFKFFGQYANLKELKNYNNGDVSINENVPSYDAKFKMSNKDENVKQLRSRYNIPTDKAPVLKMHIDGNLKGSSVGYKKLEIDFSKGGKSDLSVIDSLNFQPAKVDEDDE.

An N-terminal signal peptide occupies residues 1–22; that stretch reads MGYLKRFALYISVMILIFAIAG. Cysteine 23 carries N-palmitoyl cysteine lipidation. The S-diacylglycerol cysteine moiety is linked to residue cysteine 23.

Belongs to the staphylococcal tandem lipoprotein family.

The protein localises to the cell membrane. This is an uncharacterized protein from Staphylococcus aureus (strain NCTC 8325 / PS 47).